The following is a 2364-amino-acid chain: Cytotoxin-L (2364 aa).

The four-helical bundle stretch occupies residues 1–91 (MSLVNKAQLQ…EVLELKNNSL (91 aa)). Positions 96 to 468 (KNLHFIWIGG…APDVRSTINL (373 aa)) constitute a GT44 domain. The segment at 96–468 (KNLHFIWIGG…APDVRSTINL (373 aa)) is glucosyltransferase region. Residues 101-103 (IWI), N139, 265-270 (LAAASD), and 286-288 (DVD) contribute to the UDP-alpha-D-glucose site. Positions 288, 515, and 518 each coordinate Mg(2+). UDP-alpha-D-glucose is bound at residue 518–520 (SLW). The autoprocessing region stretch occupies residues 544–799 (GEDDILDFSQ…KSKNLHELST (256 aa)). Residues E545 and D546 each contribute to the Zn(2+) site. The Peptidase C80 domain maps to 567-774 (SSSMRTPNKE…EESIIKDISS (208 aa)). Residues Y577, K600, and K647 each coordinate 1D-myo-inositol hexakisphosphate. H653 provides a ligand contact to Zn(2+). H653 (for protease activity) is an active-site residue. C698 serves as the catalytic Nucleophile; for protease activity. H757 provides a ligand contact to Zn(2+). K764, K775, and K792 together coordinate 1D-myo-inositol hexakisphosphate. Positions 800–1500 (LLQEIKNNSN…ESIIRNIYMP (701 aa)) are translocation region. Interaction with host SEMA6A and SEMA6B regions lie at residues 1433-1438 (CIKLIE), 1466-1471 (DNETKY), 1484-1495 (FTAEFSNESIIR), 1504-1511 (NLFIYSSK), and 1596-1601 (YNNLDP). 19 Cell wall-binding repeats span residues 1833 to 1852 (VSGLIYINDSLYYFKPPKNN), 1854 to 1873 (ITGFTTIDDNKYYFDPTKSG), 1876 to 1895 (SIGEITIDGKDYYFNKQGIL), 1926 to 1945 (FIGKLNIDGKIYYFEDNYRA), 1946 to 1965 (AVEWKSLDGETYYFNPKTGE), 1967 to 1986 (LKGLHQIGDNKYYFDNNGIM), 1987 to 2006 (QTGFITINDKVFYFNNDGVM), 2007 to 2026 (QVGYIEVNGKYFYFGKNGER), 2057 to 2076 (YNGILNFNGKIYFFDISNTA), 2077 to 2097 (VVGWGILDDGSTYYFDDNTAE), 2099 to 2118 (CIGLTVINDCKYYFDDNGIR), 2119 to 2138 (QLGFITINDNIFYFSESGKI), 2139 to 2158 (ELGYQNINGNYFYIDESGLV), 2209 to 2224 (ETGWIENETDKYYFDP), 2227 to 2249 (KKAYKGINVVDDIKYYFDENGIM), 2250 to 2269 (KTGLISFENNNYYFNEDGKM), 2270 to 2289 (QFGYLNIKDKMFYFGKDGKM), 2320 to 2339 (YTGWLDLDGKRYYFTDEYIA), and 2340 to 2359 (ATSSLTIDGYNYYFDPDTAE). Residues 1835–2364 (GLIYINDSLY…PDTAELVVSE (530 aa)) are receptor-binding (CROPS) region.

The protein belongs to the clostridial glucosylating toxin (LCGT) family. In terms of assembly, homomultimer; forms an inactive homomultimer at pH 8, which dissociates at pH 4, leading to cytotoxicity. Interacts with host SEMA6A; interaction promotes toxin entry into host cell. Interacts with host SEMA6B; interaction promotes toxin entry into host cell. Requires Zn(2+) as cofactor. It depends on Mn(2+) as a cofactor. Mg(2+) is required as a cofactor. Post-translationally, undergoes autocatalytic cleavage to release the N-terminal part (Glucosyltransferase TcsL), which constitutes the active part of the toxin, in the host cytosol. 1D-myo-inositol hexakisphosphate-binding (InsP6) activates the peptidase C80 domain and promotes autoprocessing.

Its subcellular location is the secreted. The protein localises to the host endosome membrane. It localises to the host cytoplasm. It is found in the host cytosol. The protein resides in the host cell membrane. It catalyses the reaction L-threonyl-[protein] + UDP-alpha-D-glucose = 3-O-(alpha-D-glucosyl)-L-threonyl-[protein] + UDP + H(+). Protease activity is activated upon binding to 1D-myo-inositol hexakisphosphate (InsP6), which induces conformational reorganization. Its function is as follows. Precursor of a cytotoxin that targets the vascular endothelium, inducing an anti-inflammatory effect and resulting in lethal toxic shock syndrome. TcsL constitutes the main toxin that mediates the pathology of P.sordellii infection, an anaerobic Gram-positive bacterium found in soil and in the gastrointestinal and vaginal tracts of animals and humans; although the majority of carriers are asymptomatic, pathogenic P.sordellii infections arise rapidly and are highly lethal. This form constitutes the precursor of the toxin: it enters into host cells and mediates autoprocessing to release the active toxin (Glucosyltransferase TcsL) into the host cytosol. Targets vascular endothelium by binding to the semaphorin proteins SEMA6A and SEMA6B, and enters host cells via clathrin-mediated endocytosis. Once entered into host cells, acidification in the endosome promotes the membrane insertion of the translocation region and formation of a pore, leading to translocation of the GT44 and peptidase C80 domains across the endosomal membrane. This activates the peptidase C80 domain and autocatalytic processing, releasing the N-terminal part (Glucosyltransferase TcsL), which constitutes the active part of the toxin, in the cytosol. Active form of the toxin, which is released into the host cytosol following autoprocessing and inactivates small GTPases. Acts by mediating monoglucosylation of small GTPases of the Ras (H-Ras/HRAS, K-Ras/KRAS and N-Ras/NRAS) family in host cells at the conserved threonine residue located in the switch I region ('Thr-37/35'), using UDP-alpha-D-glucose as the sugar donor. Does not catalyze monoglucosylation of Ral/RALA. Also able to catalyze monoglucosylation of some members of the Rho family (Rac1 and Rap2A), but with less efficiency than with Ras proteins. Monoglucosylation of host small GTPases completely prevents the recognition of the downstream effector, blocking the GTPases in their inactive form and leading to apoptosis. Induces an anti-inflammatory effect, mainly by inactivating Ras proteins which results in blockage of the cell cycle and killing of immune cells. The absence or moderate local inflammatory response allows C.sordellii spreading in deep tissues, production of toxin which is released in the general circulation and causes a toxic shock syndrome. The sequence is that of Cytotoxin-L from Paraclostridium sordellii (Clostridium sordellii).